Reading from the N-terminus, the 210-residue chain is Shikimate kinase (210 aa).

34-39 (GVGKSV) lines the ATP pocket. Ser-38 contacts Mg(2+). 3 residues coordinate substrate: Asp-56, Arg-80, and Gly-102. ATP is bound at residue Arg-140. Arg-159 contributes to the substrate binding site.

It belongs to the shikimate kinase family. In terms of assembly, monomer. The cofactor is Mg(2+).

It localises to the cytoplasm. The catalysed reaction is shikimate + ATP = 3-phosphoshikimate + ADP + H(+). It functions in the pathway metabolic intermediate biosynthesis; chorismate biosynthesis; chorismate from D-erythrose 4-phosphate and phosphoenolpyruvate: step 5/7. In terms of biological role, catalyzes the specific phosphorylation of the 3-hydroxyl group of shikimic acid using ATP as a cosubstrate. In Bartonella henselae (strain ATCC 49882 / DSM 28221 / CCUG 30454 / Houston 1) (Rochalimaea henselae), this protein is Shikimate kinase.